The following is a 259-amino-acid chain: Phosphatidylglycerol--prolipoprotein diacylglyceryl transferase (259 aa).

4 consecutive transmembrane segments (helical) span residues 9–29 (IIFS…VIGI), 55–75 (FITY…VLLY), 92–112 (EGGM…YLFC), and 117–137 (INFL…LFLG). Arg-138 is a binding site for a 1,2-diacyl-sn-glycero-3-phospho-(1'-sn-glycerol). The next 3 helical transmembrane spans lie at 172–192 (QLYE…YTTF), 201–221 (GLNS…IEIF), and 228–248 (IGFI…MLLL).

Belongs to the Lgt family.

It is found in the cell inner membrane. It carries out the reaction L-cysteinyl-[prolipoprotein] + a 1,2-diacyl-sn-glycero-3-phospho-(1'-sn-glycerol) = an S-1,2-diacyl-sn-glyceryl-L-cysteinyl-[prolipoprotein] + sn-glycerol 1-phosphate + H(+). It participates in protein modification; lipoprotein biosynthesis (diacylglyceryl transfer). Functionally, catalyzes the transfer of the diacylglyceryl group from phosphatidylglycerol to the sulfhydryl group of the N-terminal cysteine of a prolipoprotein, the first step in the formation of mature lipoproteins. The polypeptide is Phosphatidylglycerol--prolipoprotein diacylglyceryl transferase (Rickettsia conorii (strain ATCC VR-613 / Malish 7)).